The following is a 205-amino-acid chain: Latherin (205 aa).

The cysteines at positions 133 and 176 are disulfide-linked.

It belongs to the BPI/LBP/Plunc superfamily. Plunc family. Monomer.

It is found in the secreted. In terms of biological role, major protein in sweat, has surfactant properties. This Equus quagga burchellii (Burchell's zebra) protein is Latherin (LATH).